Consider the following 438-residue polypeptide: 23S rRNA (uracil(1939)-C(5))-methyltransferase RlmD (438 aa).

Positions 10 to 69 (KASVNTKHQSVDVVRLDHNGAGIAFVDKKPVFIEGALPGEKAIIQFIEQKKQFSRAKLIK) constitute a TRAM domain. Cysteine 82, cysteine 88, cysteine 91, and cysteine 169 together coordinate [4Fe-4S] cluster. S-adenosyl-L-methionine is bound by residues glutamine 272, phenylalanine 301, asparagine 306, glutamate 322, asparagine 349, and aspartate 370. Cysteine 396 serves as the catalytic Nucleophile.

Belongs to the class I-like SAM-binding methyltransferase superfamily. RNA M5U methyltransferase family. RlmD subfamily.

The enzyme catalyses uridine(1939) in 23S rRNA + S-adenosyl-L-methionine = 5-methyluridine(1939) in 23S rRNA + S-adenosyl-L-homocysteine + H(+). Catalyzes the formation of 5-methyl-uridine at position 1939 (m5U1939) in 23S rRNA. The sequence is that of 23S rRNA (uracil(1939)-C(5))-methyltransferase RlmD from Aliivibrio fischeri (strain ATCC 700601 / ES114) (Vibrio fischeri).